The chain runs to 132 residues: Phosphomevalonate dehydratase small subunit (132 aa).

Ser-61 functions as the Proton acceptor in the catalytic mechanism.

It belongs to the AcnX type II small subunit family. Heterodimer composed of a large subunit (PMDh-L) and a small subunit (PMDh-S).

It catalyses the reaction (R)-5-phosphomevalonate = (2E)-3-methyl-5-phosphooxypent-2-enoate + H2O. Its pathway is isoprenoid biosynthesis; isopentenyl diphosphate biosynthesis via mevalonate pathway. Functionally, component of a hydro-lyase that catalyzes the dehydration of mevalonate 5-phosphate (MVA5P) to form trans-anhydromevalonate 5-phosphate (tAHMP). Involved in the archaeal mevalonate (MVA) pathway, which provides fundamental precursors for isoprenoid biosynthesis, such as isopentenyl diphosphate (IPP) and dimethylallyl diphosphate (DMAPP). The chain is Phosphomevalonate dehydratase small subunit from Archaeoglobus fulgidus (strain ATCC 49558 / DSM 4304 / JCM 9628 / NBRC 100126 / VC-16).